A 177-amino-acid polypeptide reads, in one-letter code: Isopentenyl-diphosphate Delta-isomerase 1 (177 aa).

Residues His-24 and His-30 each contribute to the Mn(2+) site. One can recognise a Nudix hydrolase domain in the interval 28–160; that stretch reads SLHRAISIFI…PHAYSFWLEA (133 aa). Cys-65 is an active-site residue. A Mg(2+)-binding site is contributed by Cys-65. His-67 contributes to the Mn(2+) binding site. Residue Glu-85 coordinates Mg(2+). Glu-110 and Glu-112 together coordinate Mn(2+). Glu-112 is a catalytic residue.

The protein belongs to the IPP isomerase type 1 family. Requires Mg(2+) as cofactor. The cofactor is Mn(2+).

It localises to the cytoplasm. The enzyme catalyses isopentenyl diphosphate = dimethylallyl diphosphate. It functions in the pathway isoprenoid biosynthesis; dimethylallyl diphosphate biosynthesis; dimethylallyl diphosphate from isopentenyl diphosphate: step 1/1. Its function is as follows. Catalyzes the 1,3-allylic rearrangement of the homoallylic substrate isopentenyl (IPP) to its highly electrophilic allylic isomer, dimethylallyl diphosphate (DMAPP). This chain is Isopentenyl-diphosphate Delta-isomerase 1, found in Aromatoleum aromaticum (strain DSM 19018 / LMG 30748 / EbN1) (Azoarcus sp. (strain EbN1)).